A 323-amino-acid chain; its full sequence is uncharacterized protein (323 aa).

Residue tyrosine 59 is the Proton donor of the active site. 198 to 208 (SPLAQGLLGGK) serves as a coordination point for NADP(+).

Belongs to the aldo/keto reductase family. Aldo/keto reductase 2 subfamily.

This is an uncharacterized protein from Mycobacterium tuberculosis (strain CDC 1551 / Oshkosh).